Here is a 642-residue protein sequence, read N- to C-terminus: 1-deoxy-D-xylulose-5-phosphate synthase (642 aa).

Residues His-79 and 120–122 (GHS) each bind thiamine diphosphate. Position 151 (Asp-151) interacts with Mg(2+). Thiamine diphosphate contacts are provided by residues 152-153 (GS), Asn-180, Tyr-290, and Glu-372. Mg(2+) is bound at residue Asn-180.

Belongs to the transketolase family. DXPS subfamily. As to quaternary structure, homodimer. The cofactor is Mg(2+). Thiamine diphosphate is required as a cofactor.

It catalyses the reaction D-glyceraldehyde 3-phosphate + pyruvate + H(+) = 1-deoxy-D-xylulose 5-phosphate + CO2. It functions in the pathway metabolic intermediate biosynthesis; 1-deoxy-D-xylulose 5-phosphate biosynthesis; 1-deoxy-D-xylulose 5-phosphate from D-glyceraldehyde 3-phosphate and pyruvate: step 1/1. Its function is as follows. Catalyzes the acyloin condensation reaction between C atoms 2 and 3 of pyruvate and glyceraldehyde 3-phosphate to yield 1-deoxy-D-xylulose-5-phosphate (DXP). This chain is 1-deoxy-D-xylulose-5-phosphate synthase, found in Rhodospirillum centenum (strain ATCC 51521 / SW).